Reading from the N-terminus, the 178-residue chain is ASSKEIAEAIGIDSATVRRDFSYFGELGRRGFGYNVKELMDFFADILNDTSITNVMLVGVGNMGRALLHYRFHERNKMKIVMAFEADDNPAVGTTDENIPIHAISEIKERISEANSQTAILTVPSVKAQEVTDILVEAGVKGILSFSPVNLSVPKDVVVQYVDLTSELQTLLYFMRKG.

59–64 lines the NAD(+) pocket; that stretch reads GVGNMG.

This sequence belongs to the transcriptional regulatory Rex family. In terms of assembly, homodimer.

It localises to the cytoplasm. Functionally, modulates transcription in response to changes in cellular NADH/NAD(+) redox state. The polypeptide is Redox-sensing transcriptional repressor Rex (Streptococcus suis).